The chain runs to 201 residues: Ras-related protein Rab-9A (201 aa).

Residue Ala2 is modified to N-acetylalanine. Gly17 contributes to the GDP binding site. The GTP site is built by Gly17, Val18, Gly19, Lys20, Ser21, Ser22, Thr34, His38, and Thr39. 4 residues coordinate GDP: Gly19, Lys20, Ser21, and Ser22. Ser21 lines the Mg(2+) pocket. Positions Lys31–Val42 match the Switch 1 motif. Mg(2+)-binding residues include Thr39 and Asp62. The short motif at Ala64–Arg78 is the Switch 2 element. GTP-binding residues include Gly65, Asn124, Lys125, Asp127, Ala155, and Lys156. GDP is bound by residues Asn124, Lys125, Asp127, Ala155, and Lys156. Ser179 carries the phosphoserine modification. Phosphothreonine is present on Thr187. S-geranylgeranyl cysteine attachment occurs at residues Cys200 and Cys201.

It belongs to the small GTPase superfamily. Rab family. In terms of assembly, interacts (preferentially in its GTP-bound form) with GCC2 (via its GRIP domain). Interacts (GTP-bound form) with SGSM1; the GDP-bound form has much lower affinity for SGSM1. Interacts with SGSM2. The GTP-bound form but not the GDP-bound form interacts with HPS4 and BLOC-3 complex (heterodimer of HPS1 and HPS4) but does not interact with HPS1 alone. Interacts (GTP-bound form) with NDE1; two RAB9A-GTP molecules lie on the opposite sides of the NDE1 homodimer; the interaction leads to RAB9A-dynein motor tethering. Interacts (GTP-bound form) with NDEL1. Mg(2+) serves as cofactor.

The protein localises to the cell membrane. It is found in the endoplasmic reticulum membrane. It localises to the golgi apparatus membrane. Its subcellular location is the late endosome. The protein resides in the cytoplasmic vesicle. The protein localises to the phagosome membrane. It is found in the phagosome. It localises to the cytoplasmic vesicle membrane. Its subcellular location is the melanosome. It catalyses the reaction GTP + H2O = GDP + phosphate + H(+). Regulated by guanine nucleotide exchange factors (GEFs) which promote the exchange of bound GDP for free GTP. Regulated by GTPase activating proteins (GAPs) which increase the GTP hydrolysis activity. Inhibited by GDP dissociation inhibitors (GDIs). In terms of biological role, the small GTPases Rab are key regulators of intracellular membrane trafficking, from the formation of transport vesicles to their fusion with membranes. Rabs cycle between an inactive GDP-bound form and an active GTP-bound form that is able to recruit to membranes different sets of downstream effectors directly responsible for vesicle formation, movement, tethering and fusion. RAB9A is involved in the transport of proteins between the endosomes and the trans-Golgi network (TGN). Specifically uses NDE1/NDEL1 as an effector to interact with the dynein motor complex in order to control retrograde trafficking of RAB9-associated late endosomes to the TGN. Involved in the recruitment of SGSM2 to melanosomes and is required for the proper trafficking of melanogenic enzymes TYR, TYRP1 and DCT/TYRP2 to melanosomes in melanocytes. This is Ras-related protein Rab-9A from Homo sapiens (Human).